We begin with the raw amino-acid sequence, 496 residues long: Amino-acid acetyltransferase, mitochondrial (496 aa).

An N-acetyltransferase domain is found at 333-493; the sequence is YHGTDCLTNG…LDVIDSIQPT (161 aa).

The protein belongs to the acetyltransferase family.

The protein localises to the mitochondrion. The enzyme catalyses L-glutamate + acetyl-CoA = N-acetyl-L-glutamate + CoA + H(+). It functions in the pathway amino-acid biosynthesis; L-arginine biosynthesis; N(2)-acetyl-L-ornithine from L-glutamate: step 1/4. Its function is as follows. N-acetylglutamate synthase involved in arginine biosynthesis. This is Amino-acid acetyltransferase, mitochondrial (arg2) from Schizosaccharomyces japonicus (strain yFS275 / FY16936) (Fission yeast).